The sequence spans 302 residues: Protoheme IX farnesyltransferase (302 aa).

9 consecutive transmembrane segments (helical) span residues 27–47 (VLTL…QSIH), 48–68 (PVLG…AGAL), 97–117 (SALH…GLAL), 119–139 (VLAA…YTIW), 148–168 (IVIG…AATG), 176–196 (LLFA…ALFI), 219–239 (IQIM…WAMG), 240–260 (LTGA…LLLA), and 280–300 (LFGF…ADKV).

This sequence belongs to the UbiA prenyltransferase family. Protoheme IX farnesyltransferase subfamily.

It is found in the cell inner membrane. It carries out the reaction heme b + (2E,6E)-farnesyl diphosphate + H2O = Fe(II)-heme o + diphosphate. It functions in the pathway porphyrin-containing compound metabolism; heme O biosynthesis; heme O from protoheme: step 1/1. Its function is as follows. Converts heme B (protoheme IX) to heme O by substitution of the vinyl group on carbon 2 of heme B porphyrin ring with a hydroxyethyl farnesyl side group. The chain is Protoheme IX farnesyltransferase from Rhizorhabdus wittichii (strain DSM 6014 / CCUG 31198 / JCM 15750 / NBRC 105917 / EY 4224 / RW1) (Sphingomonas wittichii).